The primary structure comprises 927 residues: Non-lysosomal glucosylceramidase (927 aa).

Residues 32–62 form a disordered region; sequence EETGGTKDVQVTDCKSPEDSRPPKETDCCNP. Over residues 46–58 the composition is skewed to basic and acidic residues; that stretch reads KSPEDSRPPKETD.

This sequence belongs to the non-lysosomal glucosylceramidase family. In terms of tissue distribution, widely expressed. Mainly expressed in brain, heart, skeletal muscle, kidney and placenta and expressed at lower levels in liver, spleen, small intestine and lung. Detectable in colon, thymus and peripheral blood leukocytes.

It localises to the endoplasmic reticulum membrane. The protein localises to the golgi apparatus membrane. The enzyme catalyses a beta-D-glucosyl-(1&lt;-&gt;1')-N-acylsphing-4-enine + H2O = an N-acylsphing-4-enine + D-glucose. It catalyses the reaction a beta-D-galactosyl-(1&lt;-&gt;1')-N-acylsphing-4-enine + H2O = an N-acylsphing-4-enine + D-galactose. The catalysed reaction is beta-D-glucosyl-(1-&gt;3)-O-lithocholate + H2O = lithocholate + D-glucose. It carries out the reaction beta-D-glucosyl-(1-&gt;3)-O-chenodeoxycholate + H2O = chenodeoxycholate + D-glucose. The enzyme catalyses a di-trans,poly-cis-dolichyl beta-D-glucosyl phosphate + chenodeoxycholate = beta-D-glucosyl-(1-&gt;3)-O-chenodeoxycholate + a di-trans,poly-cis-dolichyl phosphate + H(+). It catalyses the reaction octyl beta-D-glucose + chenodeoxycholate = beta-D-glucosyl-(1-&gt;3)-O-chenodeoxycholate + octan-1-ol. The catalysed reaction is cholesteryl 3-beta-D-glucoside + H2O = cholesterol + D-glucose. It carries out the reaction a beta-D-glucosyl-(1&lt;-&gt;1')-N-acylsphing-4-enine + cholesterol = cholesteryl 3-beta-D-glucoside + an N-acylsphing-4-enine. The enzyme catalyses beta-D-glucosyl-N-(9Z-octadecenoyl)-sphing-4E-enine + cholesterol = N-(9Z-octadecenoyl)-sphing-4-enine + cholesteryl 3-beta-D-glucoside. It catalyses the reaction a beta-D-galactosyl-(1&lt;-&gt;1')-N-acylsphing-4-enine + cholesterol = cholesteryl 3-beta-D-galactoside + an N-acylsphing-4-enine. The catalysed reaction is 1-(beta-D-galactosyl)-N-dodecanoylsphing-4-enine + cholesterol = cholesteryl 3-beta-D-galactoside + N-dodecanoylsphing-4-enine. The protein operates within lipid metabolism; sphingolipid metabolism. Its pathway is steroid metabolism; cholesterol metabolism. Its activity is regulated as follows. Inhibited by AMP-DMN/N -((5-adamantane-1-yl-methoxy)pentyl)-deoxynojirimycin. Activated by Mn(2+), Co(2+) and Mg(2+) and inhibited by Zn(2+). Enzymatic activity is dependent on membrane association and requires the presence of lipids. The membrane-associated enzyme is not inhibited by condutiriol B epoxide and bromocondutiriol B epoxide. Its function is as follows. Non-lysosomal glucosylceramidase that catalyzes the hydrolysis of glucosylceramides/GlcCers (such as beta-D-glucosyl-(1&lt;-&gt;1')-N-acylsphing-4-enine) to free glucose and ceramides (such as N-acylsphing-4-enine). GlcCers are membrane glycosphingolipids that have a wide intracellular distribution. They are the main precursors of more complex glycosphingolipids that play a role in cellular growth, differentiation, adhesion, signaling, cytoskeletal dynamics and membrane properties. Involved in the transglucosylation of cholesterol, transfers glucose from GlcCer to cholesterol, thereby modifying its water solubility and biological properties. Under specific conditions, may catalyze the reverse reaction, transferring glucose from cholesteryl-3-beta-D-glucoside to ceramide (such as N-acylsphing-4-enine). May play a role in the metabolism of bile acids. Able to hydrolyze bile acid 3-O-glucosides as well as to produce bile acid-glucose conjugates thanks to a bile acid glucosyl transferase activity. Catalyzes the hydrolysis of galactosylceramides/GalCers (such as beta-D-galactosyl-(1&lt;-&gt;1')-N-acylsphing-4-enine), as well as the galactosyl transfer between GalCers and cholesterol in vitro with lower activity compared with their activity against GlcCers. The polypeptide is Non-lysosomal glucosylceramidase (Homo sapiens (Human)).